Reading from the N-terminus, the 199-residue chain is MRLTAKQITWLKVILHLAGLLPFIWLFWAASQGYFSADPAKDIQHFTGRMALKFLLASLLISPLARYAKQPLLIRTRRLLGLWCFAWATLHLTSYALLELGINNLALLGSELISRPYLTLGIVSWVILFALTLTSTQYAQRKLGRRWQFLHNFVYLVAILTPIHYLWSVKILSPQPVIYALLALGLLAWRYKKFRQWWR.

Helical transmembrane passes span 8–28, 82–102, 116–136, 149–169, and 171–191; these read ITWLKVILHLAGLLPFIWLFW, LWCFAWATLHLTSYALLELGI, PYLTLGIVSWVILFALTLTST, FLHNFVYLVAILTPIHYLWSV, and ILSPQPVIYALLALGLLAWRY.

Belongs to the MsrQ family. As to quaternary structure, heterodimer of a catalytic subunit (MsrP) and a heme-binding subunit (MsrQ). FMN is required as a cofactor. Requires heme b as cofactor.

It is found in the cell inner membrane. Its function is as follows. Part of the MsrPQ system that repairs oxidized periplasmic proteins containing methionine sulfoxide residues (Met-O), using respiratory chain electrons. Thus protects these proteins from oxidative-stress damage caused by reactive species of oxygen and chlorine generated by the host defense mechanisms. MsrPQ is essential for the maintenance of envelope integrity under bleach stress, rescuing a wide series of structurally unrelated periplasmic proteins from methionine oxidation. MsrQ provides electrons for reduction to the reductase catalytic subunit MsrP, using the quinone pool of the respiratory chain. The protein is Protein-methionine-sulfoxide reductase heme-binding subunit MsrQ of Enterobacter sp. (strain 638).